The following is a 272-amino-acid chain: Ribonuclease 3 (272 aa).

Polar residues predominate over residues 1–20 (MTDDVTNVEQPSTASEQQPQ). Positions 1–38 (MTDDVTNVEQPSTASEQQPQDVPAAEPSAAKKRRANKA) are disordered. The RNase III domain maps to 44 to 171 (AAAIEQRLGH…VIGAIYLDGG (128 aa)). E84 is a binding site for Mg(2+). The active site involves D88. Residues D157 and E160 each coordinate Mg(2+). E160 is a catalytic residue. One can recognise a DRBM domain in the interval 196–265 (DPKTVLQEWA…ASAMLAREGV (70 aa)).

It belongs to the ribonuclease III family. As to quaternary structure, homodimer. Mg(2+) serves as cofactor.

The protein resides in the cytoplasm. It carries out the reaction Endonucleolytic cleavage to 5'-phosphomonoester.. In terms of biological role, digests double-stranded RNA. Involved in the processing of primary rRNA transcript to yield the immediate precursors to the large and small rRNAs (23S and 16S). Processes some mRNAs, and tRNAs when they are encoded in the rRNA operon. Processes pre-crRNA and tracrRNA of type II CRISPR loci if present in the organism. This Rhodopseudomonas palustris (strain ATCC BAA-98 / CGA009) protein is Ribonuclease 3.